The sequence spans 270 residues: Putative pyruvate, phosphate dikinase regulatory protein (270 aa).

148 to 155 contributes to the ADP binding site; the sequence is GISRTSKT.

It belongs to the pyruvate, phosphate/water dikinase regulatory protein family. PDRP subfamily.

It catalyses the reaction N(tele)-phospho-L-histidyl/L-threonyl-[pyruvate, phosphate dikinase] + ADP = N(tele)-phospho-L-histidyl/O-phospho-L-threonyl-[pyruvate, phosphate dikinase] + AMP + H(+). The catalysed reaction is N(tele)-phospho-L-histidyl/O-phospho-L-threonyl-[pyruvate, phosphate dikinase] + phosphate + H(+) = N(tele)-phospho-L-histidyl/L-threonyl-[pyruvate, phosphate dikinase] + diphosphate. Bifunctional serine/threonine kinase and phosphorylase involved in the regulation of the pyruvate, phosphate dikinase (PPDK) by catalyzing its phosphorylation/dephosphorylation. This Bacillus cereus (strain AH187) protein is Putative pyruvate, phosphate dikinase regulatory protein.